The sequence spans 2849 residues: Immunoglobulin-like and fibronectin type III domain-containing protein 1 (2849 aa).

The segment at 82–108 (AGSAARPDGSGSESLAASSSWKPRRRL) is disordered. Residues 90-101 (GSGSESLAASSS) show a composition bias toward low complexity. The 91-residue stretch at 187–277 (PDFKQKPVTL…GEATCSVRLT (91 aa)) folds into the Ig-like 1 domain. Residues 347-380 (IVDFRGMLRKLQEMKKEQEDRMAQYVSAIANLRH) are a coiled coil. An Ig-like 2 domain is found at 468 to 557 (PRVVVPLAET…SSAWLVVEGG (90 aa)). 12 disordered regions span residues 577–600 (LASE…RGSL), 652–760 (VTLP…AGQR), 864–924 (YPGQ…DLRS), 962–981 (VGQR…IGPQ), 1061–1103 (EEEF…EGMA), 1221–1258 (TVGS…SSWG), 1312–1338 (STVG…SEGH), 1350–1384 (RDGS…PDGE), 1498–1523 (ETGR…MGSE), 1654–1675 (EWKD…SEEI), 1724–1780 (QQGV…ATSH), and 1827–2055 (GAAG…SMDH). Positions 717–742 (HPRDRRLESRGEGQEHSEGHGSELDR) are enriched in basic and acidic residues. Residues 866–880 (GQTSEGNDTQKSSLS) show a composition bias toward polar residues. Over residues 1070–1084 (RSQGKGSRGGMGLGG) the composition is skewed to gly residues. A compositionally biased stretch (polar residues) spans 1873–1882 (SKPQEPQNEL). Composition is skewed to basic and acidic residues over residues 1988–2004 (SEDR…DRRQ) and 2012–2021 (SRRDTQEGRS). An Ig-like 3 domain is found at 2034-2137 (PRSRYQPGTG…GCQHSEASLT (104 aa)). 3 consecutive Fibronectin type-III domains span residues 2244 to 2339 (PPQG…VAPE), 2344 to 2443 (PPSA…MRPP), and 2445 to 2540 (PVRD…AMPA). The region spanning 2544 to 2628 (PRFLMDSGTK…LRNLQGKEAT (85 aa)) is the Ig-like 4 domain. Residues 2641–2735 (APGSIYLQEN…TSQPWCIPRQ (95 aa)) form the Fibronectin type-III 4 domain. Positions 2749–2845 (PDLSQKPRFL…AVSTATLIVT (97 aa)) constitute an Ig-like 5 domain.

In terms of assembly, interacts with FLNC. Interacts with KY. In terms of tissue distribution, isoform 1, isoform 3 and isoform 4 are expressed in skeletal muscle while isoform 2 is detected in both skeletal muscle and heart (at protein level).

It localises to the nucleus. The protein resides in the cytoplasm. Its subcellular location is the myofibril. The protein localises to the sarcomere. It is found in the z line. The polypeptide is Immunoglobulin-like and fibronectin type III domain-containing protein 1 (Igfn1) (Mus musculus (Mouse)).